A 257-amino-acid chain; its full sequence is Ribosomal RNA small subunit methyltransferase J (257 aa).

Residues 107-108, 123-124, and aspartate 177 contribute to the S-adenosyl-L-methionine site; these read RD and ER.

This sequence belongs to the methyltransferase superfamily. RsmJ family.

It localises to the cytoplasm. The catalysed reaction is guanosine(1516) in 16S rRNA + S-adenosyl-L-methionine = N(2)-methylguanosine(1516) in 16S rRNA + S-adenosyl-L-homocysteine + H(+). Functionally, specifically methylates the guanosine in position 1516 of 16S rRNA. The protein is Ribosomal RNA small subunit methyltransferase J of Haemophilus influenzae (strain ATCC 51907 / DSM 11121 / KW20 / Rd).